The chain runs to 104 residues: SOSS complex subunit C (104 aa).

Alanine 2 bears the N-acetylalanine mark. At serine 50 the chain carries Phosphoserine.

The protein belongs to the SOSS-C family. In terms of assembly, component of the SOSS complex, composed of SOSS-B (SOSS-B1/NABP2 or SOSS-B2/NABP1), SOSS-A/INTS3 and SOSS-C/INIP. SOSS complexes containing SOSS-B1/NABP2 are more abundant than complexes containing SOSS-B2/NABP1. Interacts with INTS3; the interaction is direct.

The protein resides in the nucleus. Functionally, component of the SOSS complex, a multiprotein complex that functions downstream of the MRN complex to promote DNA repair and G2/M checkpoint. The SOSS complex associates with single-stranded DNA at DNA lesions and influences diverse endpoints in the cellular DNA damage response including cell-cycle checkpoint activation, recombinational repair and maintenance of genomic stability. Required for efficient homologous recombination-dependent repair of double-strand breaks (DSBs) and ATM-dependent signaling pathways. This chain is SOSS complex subunit C (Inip), found in Mus musculus (Mouse).